A 242-amino-acid chain; its full sequence is Probable transcriptional regulatory protein NGO_1291 (242 aa).

The protein belongs to the TACO1 family.

Its subcellular location is the cytoplasm. The polypeptide is Probable transcriptional regulatory protein NGO_1291 (Neisseria gonorrhoeae (strain ATCC 700825 / FA 1090)).